The primary structure comprises 434 residues: Serine hydroxymethyltransferase (434 aa).

(6S)-5,6,7,8-tetrahydrofolate is bound by residues L131 and 135-137; that span reads GHL. K240 carries the post-translational modification N6-(pyridoxal phosphate)lysine.

This sequence belongs to the SHMT family. As to quaternary structure, homodimer. Pyridoxal 5'-phosphate is required as a cofactor.

It localises to the cytoplasm. It carries out the reaction (6R)-5,10-methylene-5,6,7,8-tetrahydrofolate + glycine + H2O = (6S)-5,6,7,8-tetrahydrofolate + L-serine. Its pathway is one-carbon metabolism; tetrahydrofolate interconversion. It functions in the pathway amino-acid biosynthesis; glycine biosynthesis; glycine from L-serine: step 1/1. Catalyzes the reversible interconversion of serine and glycine with tetrahydrofolate (THF) serving as the one-carbon carrier. This reaction serves as the major source of one-carbon groups required for the biosynthesis of purines, thymidylate, methionine, and other important biomolecules. Also exhibits THF-independent aldolase activity toward beta-hydroxyamino acids, producing glycine and aldehydes, via a retro-aldol mechanism. The polypeptide is Serine hydroxymethyltransferase (Gluconobacter oxydans (strain 621H) (Gluconobacter suboxydans)).